The chain runs to 152 residues: Putative RRN3-like protein RRN3P1 (152 aa).

It belongs to the RRN3 family.

The protein is Putative RRN3-like protein RRN3P1 (RRN3P1) of Homo sapiens (Human).